A 757-amino-acid chain; its full sequence is Elongation factor G, mitochondrial (757 aa).

Residues 66–344 (DRMRNIGISA…VLDYLPCPME (279 aa)) enclose the tr-type G domain. Residues 75-82 (AHIDSGKT), 142-146 (DTPGH), and 196-199 (NKLD) each bind GTP.

The protein belongs to the TRAFAC class translation factor GTPase superfamily. Classic translation factor GTPase family. EF-G/EF-2 subfamily.

Its subcellular location is the mitochondrion. It functions in the pathway protein biosynthesis; polypeptide chain elongation. In terms of biological role, mitochondrial GTPase that catalyzes the GTP-dependent ribosomal translocation step during translation elongation. During this step, the ribosome changes from the pre-translocational (PRE) to the post-translocational (POST) state as the newly formed A-site-bound peptidyl-tRNA and P-site-bound deacylated tRNA move to the P and E sites, respectively. Catalyzes the coordinated movement of the two tRNA molecules, the mRNA and conformational changes in the ribosome. This chain is Elongation factor G, mitochondrial, found in Oryza sativa subsp. japonica (Rice).